The chain runs to 242 residues: UPF0157 protein PA4798 (242 aa).

A disordered region spans residues 215–242 (AGAESTPGGPADTAYFESLRSRVSKPQD).

Belongs to the UPF0157 (GrpB) family.

This chain is UPF0157 protein PA4798, found in Pseudomonas aeruginosa (strain ATCC 15692 / DSM 22644 / CIP 104116 / JCM 14847 / LMG 12228 / 1C / PRS 101 / PAO1).